Here is a 138-residue protein sequence, read N- to C-terminus: NADPH-dependent 7-cyano-7-deazaguanine reductase (138 aa).

Cys53 functions as the Thioimide intermediate in the catalytic mechanism. Asp60 acts as the Proton donor in catalysis. Substrate is bound by residues 75–77 and 94–95; these read VEL and HE.

The protein belongs to the GTP cyclohydrolase I family. QueF type 1 subfamily.

The protein localises to the cytoplasm. The catalysed reaction is 7-aminomethyl-7-carbaguanine + 2 NADP(+) = 7-cyano-7-deazaguanine + 2 NADPH + 3 H(+). Its pathway is tRNA modification; tRNA-queuosine biosynthesis. Catalyzes the NADPH-dependent reduction of 7-cyano-7-deazaguanine (preQ0) to 7-aminomethyl-7-deazaguanine (preQ1). The polypeptide is NADPH-dependent 7-cyano-7-deazaguanine reductase (Gloeothece citriformis (strain PCC 7424) (Cyanothece sp. (strain PCC 7424))).